The sequence spans 259 residues: MTNNYINSPLDQFIINNLLEINSPFLNLSTLNFSTFSLYTLFVVLVISLTFILSIGGESNNLVKGSNWLIAIEAIFDTILNMVKGQIGGSVYGRYVPLVYTLFTFILVANLIGMVPYNFALSASLIYIIGISVSLWIGLTILGLFLNKAVFFSLFVPSGTPLPLVPVLVLIELLSYTARAISLGLRLAANTLSGHLLMSILGNLVKNLMSINYFTFIFGLIPLAGIFAIVILEFAIACIQAYVFAILTSSYLKDSIYLH.

Residues methionine 1 to asparagine 7 constitute a propeptide, removed in mature form. The next 5 helical transmembrane spans lie at phenylalanine 36–glycine 56, tyrosine 95–valine 115, leucine 125–phenylalanine 145, leucine 164–lysine 206, and isoleucine 211–lysine 253.

F-type ATP synthases have 2 components, the catalytic core F(1) and the membrane-embedded component F(0), linked together by a central stalk and a peripheral stalk. The central stalk, also called rotor shaft, is often seen as part of F(1). The peripheral stalk is seen as part of F(0). F(0) contains the membrane channel next to the rotor. F-type ATP synthases form dimers but each monomer functions independently in ATP generation. The dimer consists of 18 different polypeptides: ATP1 (subunit alpha, part of F(1), 3 molecules per monomer), ATP2 (subunit beta, part of F(1), 3 molecules per monomer), ATP3 (subunit gamma, part of the central stalk), ATP4 (subunit b, part of the peripheral stalk), ATP5/OSCP (subunit 5/OSCP, part of the peripheral stalk), ATP6 (subunit a, part of the peripheral stalk), ATP7 (subunit d, part of the peripheral stalk), ATP8 (subunit 8, part of the peripheral stalk), OLI1 (subunit c, part of the rotor, 10 molecules per monomer), ATP14 (subunit h, part of the peripheral stalk), ATP15 (subunit epsilon, part of the central stalk), ATP16 (subunit delta, part of the central stalk), ATP17 (subunit f, part of the peripheral stalk), ATP18 (subunit i/j, part of the peripheral stalk). Dimer-specific subunits are ATP19 (subunit k, at interface between monomers), ATP20 (subunit g, at interface between monomers), TIM11 (subunit e, at interface between monomers). Also contains subunit L.

It is found in the mitochondrion inner membrane. Functionally, mitochondrial membrane ATP synthase (F(1)F(0) ATP synthase or Complex V) produces ATP from ADP in the presence of a proton gradient across the membrane which is generated by electron transport complexes of the respiratory chain. F-type ATP synthases consist of two structural domains, F(1) - containing the extramembraneous catalytic core, and F(0) - containing the membrane proton channel, linked together by a central stalk and a peripheral stalk. During catalysis, ATP synthesis in the catalytic domain of F(1) is coupled via a rotary mechanism of the central stalk subunits to proton translocation. Key component of the proton channel; it may play a direct role in the translocation of protons across the membrane. In Pichia angusta (Yeast), this protein is ATP synthase subunit a.